Reading from the N-terminus, the 688-residue chain is Protein sel-1 homolog 2 (688 aa).

Positions 1–23 (MKPLSLLIEILIILGVTIKTIKA) are cleaved as a signal peptide. The Extracellular segment spans residues 24–662 (EEHNKRQKER…RWNWLKLDNT (639 aa)). Asparagine 34 is a glycosylation site (N-linked (GlcNAc...) asparagine). Sel1-like repeat units follow at residues 107 to 142 (GDQLFKMGIKVLQQSKSQKQKEEAYLLFAKAADMGN), 143 to 178 (LKAMEKMADALLFGNFGVQNITAAIQLYESLAKEGS), 179 to 214 (CKAQNALGFLSSYGIGMEYDQAKALIYYTFGSAGGN), 215 to 250 (MMSQMILGYRYLSGINVLQNCEVALSYYKKVADYIA), 297 to 333 (VQIQVSLGQLHLIGRKGLDQDYYKALHYFLKAAKAGS), 334 to 370 (ANAMAFIGKMYLEGNAAVPQNNATAFKYFSMAASKGN), 371 to 406 (AIGLHGLGLLYFHGKGVPLNYAEALKYFQKAAEKGW), 407 to 442 (PDAQFQLGFMYYSGSGIWKDYKLAFKYFYLASQSGQ), 443 to 478 (PLAIYYLAKMYATGTGVVRSCRTAVELYKGVCELGH), 551 to 586 (AFARVKIGDYHYYGYGTKKDYQTAATHYSIAANKYH), and 588 to 623 (AQAMFNLAYMYEHGLGITKDIHLARRLYDMAAQTSP). A helical membrane pass occupies residues 663–683 (IGPHWDLFVIGLIVPGLILLL). Residues 684 to 688 (RNHHG) lie on the Cytoplasmic side of the membrane.

It belongs to the sel-1 family.

Its subcellular location is the membrane. It is found in the cell projection. The protein localises to the cilium. It localises to the nucleus speckle. The chain is Protein sel-1 homolog 2 (SEL1L2) from Homo sapiens (Human).